The chain runs to 66 residues: uncharacterized protein (66 aa).

The span at methionine 1–asparagine 20 shows a compositional bias: low complexity. The tract at residues methionine 1–asparagine 47 is disordered. Residues asparagine 36–asparagine 47 show a composition bias toward polar residues.

This is an uncharacterized protein from Dictyostelium discoideum (Social amoeba).